The chain runs to 644 residues: Polyglycine hydrolase (644 aa).

The signal sequence occupies residues 1-23 (MYTSRSLFSTLASCLSLATLVAS). Residues Asn-100, Asn-144, Asn-159, Asn-244, and Asn-340 are each glycosylated (N-linked (GlcNAc...) asparagine). The cysteines at positions 149 and 183 are disulfide-linked. The active site involves Ser-369. N-linked (GlcNAc...) asparagine glycosylation is found at Asn-389, Asn-410, Asn-443, and Asn-486.

It belongs to the peptidase S12 family.

The protein resides in the secreted. The enzyme catalyses a glycyl-glycyl-[protein] + H2O = N-terminal glycyl-[protein] + [protein]-C-terminal glycine. Not inhibited by phenylmethylsulfonyl fluoride (PMSF; serine peptidase class S1 inhibitor), clavulanic acid (beta-lactamase inhibitor) or ampicillin (penicillin-binding protein (PBP) inhibitor). Functionally, serine-type endopeptidase that cleaves Gly-Gly bonds in the polyglycine linker of host plant class IV chitinases to disrupt their chitin-binding, and thereby plays a role in lowering the defense responses of the host to the fungus. Degrades Z.mays Endochitinase A (CHIA). Has low proteolytic activity on Z.mays Endochitinase B (CHIB). The polypeptide is Polyglycine hydrolase (Cochliobolus carbonum (strain 26-R-13) (Maize leaf spot fungus)).